Reading from the N-terminus, the 500-residue chain is Probable cytosol aminopeptidase (500 aa).

Positions 265 and 270 each coordinate Mn(2+). The active site involves Lys277. Mn(2+)-binding residues include Asp288, Asp347, and Glu349. Arg351 is an active-site residue.

This sequence belongs to the peptidase M17 family. Requires Mn(2+) as cofactor.

It is found in the cytoplasm. The catalysed reaction is Release of an N-terminal amino acid, Xaa-|-Yaa-, in which Xaa is preferably Leu, but may be other amino acids including Pro although not Arg or Lys, and Yaa may be Pro. Amino acid amides and methyl esters are also readily hydrolyzed, but rates on arylamides are exceedingly low.. It carries out the reaction Release of an N-terminal amino acid, preferentially leucine, but not glutamic or aspartic acids.. In terms of biological role, presumably involved in the processing and regular turnover of intracellular proteins. Catalyzes the removal of unsubstituted N-terminal amino acids from various peptides. The chain is Probable cytosol aminopeptidase from Bdellovibrio bacteriovorus (strain ATCC 15356 / DSM 50701 / NCIMB 9529 / HD100).